A 613-amino-acid polypeptide reads, in one-letter code: Ribosome-associated molecular chaperone SSB1 (613 aa).

Positions 1–391 (MAEGVFSGAI…ILTGSNLSDD (391 aa)) are nucleotide binding domain (NBD). ATP contacts are provided by residues 16–18 (TTY), Lys73, 205–207 (GGT), 271–278 (ERAKRTLS), and Gly342. Residues 392–402 (TKDLLLLDVAP) form an inter-domain linker region. The segment at 403 to 613 (LSLGVAMQGD…RVVTKAMATR (211 aa)) is substrate binding domain (SBD). Residues 516–612 (SEDIEKMVSQ…KRVVTKAMAT (97 aa)) are lid domain (SBDalpha). Positions 574-582 (VEAALADAF) match the Nuclear export signal motif.

The protein belongs to the heat shock protein 70 family. Ssb-type Hsp70 subfamily. In terms of assembly, binds to ribosomes. Binds close to the ribosomal tunnel exit via contacts with both ribosomal proteins and rRNA. Directly interacts with nascent polypeptides. This interaction is dependent on the ribosome-associated complex (RAC). Interacts with SSE1. Interacts with FES1.

It is found in the cytoplasm. It catalyses the reaction ATP + H2O = ADP + phosphate + H(+). In terms of biological role, ribosome-bound, Hsp70-type chaperone that assists in the cotranslational folding of newly synthesized proteins in the cytosol. Stimulates folding by interacting with nascent chains, binding to short, largely hydrophobic sequences exposed by unfolded proteins, thereby stabilizing longer, more slowly translated, and aggregation-prone nascent polypeptides and domains that cannot fold stably until fully synthesized. The Hsp70-protein substrate interaction depends on ATP-binding and on allosteric regulation between the NBD and the SBD. The ATP-bound state is characterized by a fast exchange rate of substrate (low affinity state), while in the ADP-bound state exchange is much slower (high affinity state). During the Hsp70 cycle, the chaperone switches between the ATP-bound state (open conformation) and the ADP-bound state (closed conformation) by major conformational rearrangements involving mainly the lid domain. Ssb cooperates with a specific Hsp40/Hsp70 co-chaperone termed the ribosome-associated complex (RAC), which stimulates the ATPase activity of the ribosome-associated pool of Ssbs and switches it to the high affinity substrate binding state. Hsp110 chaperone SSE1 and FES1 act as nucleotide exchange factors that cause substrate release. This is Ribosome-associated molecular chaperone SSB1 (SSB1) from Eremothecium gossypii (strain ATCC 10895 / CBS 109.51 / FGSC 9923 / NRRL Y-1056) (Yeast).